The following is a 304-amino-acid chain: Putative S-adenosyl-L-methionine-dependent methyltransferase MSMEG_1481/MSMEI_1445 (304 aa).

S-adenosyl-L-methionine contacts are provided by residues D127 and 156–157; that span reads DL.

This sequence belongs to the UPF0677 family.

Exhibits S-adenosyl-L-methionine-dependent methyltransferase activity. The polypeptide is Putative S-adenosyl-L-methionine-dependent methyltransferase MSMEG_1481/MSMEI_1445 (Mycolicibacterium smegmatis (strain ATCC 700084 / mc(2)155) (Mycobacterium smegmatis)).